The sequence spans 257 residues: Homeobox protein goosecoid (257 aa).

The segment at residues 160 to 219 (KRRHRTIFTDEQLEALENLFQETKYPDVGTREQLARKVHLREEKVEVWFKNRRAKWRRQK) is a DNA-binding region (homeobox). The interval 213 to 257 (AKWRRQKRSSSEESENAEKWNKTSSSKASPEKREEEGKSDLDSDS) is disordered. Positions 241-257 (SPEKREEEGKSDLDSDS) are enriched in basic and acidic residues.

This sequence belongs to the paired homeobox family. Bicoid subfamily.

The protein localises to the nucleus. Its function is as follows. Regulates chordin (CHRD). May play a role in spatial programing within discrete embryonic fields or lineage compartments during organogenesis. In concert with NKX3-2, plays a role in defining the structural components of the middle ear; required for the development of the entire tympanic ring. Probably involved in the regulatory networks that define neural crest cell fate specification and determine mesoderm cell lineages in mammals. In Saguinus labiatus (Red-chested mustached tamarin), this protein is Homeobox protein goosecoid (GSC).